The chain runs to 457 residues: Chromogranin-A (457 aa).

Residues Met1–Ala18 form the signal peptide. A disulfide bridge connects residues Cys35 and Cys56. Residues Ser41–Thr59 form an O-glycosylated at one site only in cerebrospinal fluid region. The segment at Lys88–Ile440 is disordered. Residues Glu116–Glu144 are compositionally biased toward basic and acidic residues. Residue Ser142 is modified to Phosphoserine. Positions Gly171–Ala180 are enriched in acidic residues. Residues Thr181 and Thr183 are each glycosylated (O-linked (GalNAc...) threonine). The O-glycosylated at one site only in cerebrospinal fluid stretch occupies residues Thr181–Ser191. The span at Asn182–Ser191 shows a compositional bias: polar residues. At Tyr194 the chain carries Phosphotyrosine. Ser203 and Ser218 each carry phosphoserine. Residues Glu229–Gly249 show a composition bias toward acidic residues. Thr251 is a glycosylation site (O-linked (GalNAc...) threonine). Composition is skewed to basic and acidic residues over residues Lys263–Ser272 and Pro291–Lys303. Residues Ser270 and Ser300 each carry the phosphoserine modification. Gly319 carries the post-translational modification Glycine amide. A phosphoserine mark is found at Ser322, Ser333, and Ser371. Positions Glu330–Gly360 are enriched in basic and acidic residues. Met372 carries the post-translational modification Methionine sulfoxide. A phosphoserine mark is found at Ser398, Ser402, Ser424, and Ser438. Residues Tyr414–Asp431 show a composition bias toward basic and acidic residues. O-linked (Xyl...) (chondroitin sulfate) serine glycosylation is present at Ser424. Position 456 is an arginine amide (Arg456).

The protein belongs to the chromogranin/secretogranin protein family. Self-interacts; self-assembly is promoted in vitro by chondroitin sulfate attachment which occurs at mildly acidic pH conditions. Interacts with SCG3. Interacts with ITPR1 in the secretory granules. Sulfated on tyrosine residues and/or contains sulfated glycans. Post-translationally, O-glycosylated with core 1 or possibly core 8 glycans. Contains chondroitin sulfate (CS); CS attachment is pH-dependent, being observed at mildly acidic conditions of pH 5 but not at neutral pH, and promotes self-assembly in vitro. In terms of processing, proteolytic processing gives rise to an additional longer form of catestatin (residues 358-390) which displays a less potent catecholamine release-inhibitory activity. Plasmin-mediated proteolytic processing can give rise to additional shorter and longer forms of catestatin peptides. Detected in cerebrospinal fluid (at protein level). Detected in urine (at protein level). In terms of tissue distribution, found in the brain.

The protein localises to the secreted. The protein resides in the cytoplasmic vesicle. Its subcellular location is the secretory vesicle. It is found in the neuronal dense core vesicle. In terms of biological role, strongly inhibits glucose induced insulin release from the pancreas. Inhibits catecholamine release from chromaffin cells and noradrenergic neurons by acting as a non-competitive nicotinic cholinergic antagonist. Displays antibacterial activity against Gram-positive bacteria S.aureus and M.luteus, and Gram-negative bacteria E.coli and P.aeruginosa. Can induce mast cell migration, degranulation and production of cytokines and chemokines. Acts as a potent scavenger of free radicals in vitro. May play a role in the regulation of cardiac function and blood pressure. Functionally, regulates granule biogenesis in endocrine cells by up-regulating the transcription of protease nexin 1 (SERPINE2) via a cAMP-PKA-SP1 pathway. This leads to inhibition of granule protein degradation in the Golgi complex which in turn promotes granule formation. The polypeptide is Chromogranin-A (CHGA) (Homo sapiens (Human)).